The sequence spans 332 residues: 2,3-diketo-L-gulonate reductase (332 aa).

His44 serves as the catalytic Proton donor. Residues 168–174, 224–225, and 304–306 each bind NAD(+); these read ITMVDMS, WK, and GHE.

Belongs to the LDH2/MDH2 oxidoreductase family. DlgD subfamily. Homodimer.

It localises to the cytoplasm. It carries out the reaction 3-dehydro-L-gulonate + NAD(+) = 2,3-dioxo-L-gulonate + NADH + H(+). The catalysed reaction is 3-dehydro-L-gulonate + NADP(+) = 2,3-dioxo-L-gulonate + NADPH + H(+). Its function is as follows. Catalyzes the reduction of 2,3-diketo-L-gulonate in the presence of NADH, to form 3-keto-L-gulonate. In Salmonella agona (strain SL483), this protein is 2,3-diketo-L-gulonate reductase.